Here is a 366-residue protein sequence, read N- to C-terminus: GTP-binding protein 10 (366 aa).

Positions 13 to 148 (GNFIDNLRIF…RIVHLDLKVI (136 aa)) constitute an Obg domain. Residues 149–344 (ADVGLVGFPN…LKSCIRKALD (196 aa)) form the OBG-type G domain. Residues 155-162 (GFPNAGKS), 202-206 (DLPGL), and 278-281 (NKMD) each bind GTP. The span at 346 to 355 (QDGKESDAHR) shows a compositional bias: basic and acidic residues. The interval 346-366 (QDGKESDAHRSKQLLNLQSSS) is disordered.

This sequence belongs to the TRAFAC class OBG-HflX-like GTPase superfamily. OBG GTPase family.

Its subcellular location is the nucleus. It localises to the nucleolus. In terms of biological role, may be involved in the ribosome maturation process. The protein is GTP-binding protein 10 (Gtpbp10) of Mus musculus (Mouse).